A 340-amino-acid polypeptide reads, in one-letter code: Guanine nucleotide-binding protein G(I)/G(S)/G(T) subunit beta-1 (340 aa).

WD repeat units follow at residues 53–83 (GHLA…IIWD), 95–125 (LRSS…SIYN), 141–170 (GHTG…ALWD), 182–212 (GHTG…KLWD), 224–254 (GHES…RLFD), 268–298 (NIIC…NVWD), and 310–340 (GHDN…KIWN).

The protein belongs to the WD repeat G protein beta family. In terms of assembly, g proteins are composed of 3 units, alpha, beta and gamma.

Its function is as follows. Guanine nucleotide-binding proteins (G proteins) are involved as a modulator or transducer in various transmembrane signaling systems. The beta and gamma chains are required for the GTPase activity, for replacement of GDP by GTP, and for G protein-effector interaction. The chain is Guanine nucleotide-binding protein G(I)/G(S)/G(T) subunit beta-1 (gnb1) from Danio rerio (Zebrafish).